The primary structure comprises 704 residues: DNA ligase (704 aa).

NAD(+) is bound by residues 43 to 47 (DADYD), 92 to 93 (SL), and Glu124. Catalysis depends on Lys126, which acts as the N6-AMP-lysine intermediate. NAD(+) is bound by residues Arg147, Glu182, Lys298, and Lys322. 4 residues coordinate Zn(2+): Cys427, Cys430, Cys445, and Cys451. The region spanning 625 to 704 (PVESPIAGKI…DAWLRLIGDA (80 aa)) is the BRCT domain.

Belongs to the NAD-dependent DNA ligase family. LigA subfamily. It depends on Mg(2+) as a cofactor. Mn(2+) serves as cofactor.

It carries out the reaction NAD(+) + (deoxyribonucleotide)n-3'-hydroxyl + 5'-phospho-(deoxyribonucleotide)m = (deoxyribonucleotide)n+m + AMP + beta-nicotinamide D-nucleotide.. Its function is as follows. DNA ligase that catalyzes the formation of phosphodiester linkages between 5'-phosphoryl and 3'-hydroxyl groups in double-stranded DNA using NAD as a coenzyme and as the energy source for the reaction. It is essential for DNA replication and repair of damaged DNA. This Cereibacter sphaeroides (strain ATCC 17025 / ATH 2.4.3) (Rhodobacter sphaeroides) protein is DNA ligase.